The sequence spans 290 residues: Shikimate dehydrogenase (NADP(+)) (290 aa).

Residues 22–24 (SLS) and Thr-68 contribute to the shikimate site. The active-site Proton acceptor is the Lys-72. An NADP(+)-binding site is contributed by Asp-84. Shikimate-binding residues include Asn-93 and Asp-108. NADP(+) contacts are provided by residues 133–137 (GSGGS) and Ile-228. Residue Tyr-230 participates in shikimate binding. Gly-251 is an NADP(+) binding site.

The protein belongs to the shikimate dehydrogenase family. Homodimer.

The enzyme catalyses shikimate + NADP(+) = 3-dehydroshikimate + NADPH + H(+). The protein operates within metabolic intermediate biosynthesis; chorismate biosynthesis; chorismate from D-erythrose 4-phosphate and phosphoenolpyruvate: step 4/7. Involved in the biosynthesis of the chorismate, which leads to the biosynthesis of aromatic amino acids. Catalyzes the reversible NADPH linked reduction of 3-dehydroshikimate (DHSA) to yield shikimate (SA). This Leptospira interrogans serogroup Icterohaemorrhagiae serovar Lai (strain 56601) protein is Shikimate dehydrogenase (NADP(+)).